A 451-amino-acid chain; its full sequence is Clusterin (451 aa).

A signal peptide spans 1–18 (MELPLLALLSLGLVCQGG). 5 disulfide bridges follow: cysteine 98–cysteine 314, cysteine 109–cysteine 306, cysteine 112–cysteine 303, cysteine 117–cysteine 296, and cysteine 125–cysteine 286. N-linked (GlcNAc...) asparagine glycosylation is found at asparagine 99, asparagine 141, asparagine 278, asparagine 355, asparagine 375, and asparagine 447.

Belongs to the clusterin family. Antiparallel disulfide-linked heterodimer of an alpha chain and a beta chain. Self-associates and forms higher oligomers. Interacts with a broad range of misfolded proteins. Post-translationally, proteolytically cleaved on its way through the secretory system, probably within the Golgi lumen. In terms of processing, polyubiquitinated, leading to proteasomal degradation.

The protein localises to the secreted. The protein resides in the cytoplasmic vesicle. It localises to the secretory vesicle. It is found in the chromaffin granule. Its subcellular location is the nucleus. The protein localises to the cytoplasm. The protein resides in the mitochondrion membrane. It localises to the cytosol. It is found in the endoplasmic reticulum. Functionally, functions as extracellular chaperone that prevents aggregation of nonnative proteins. Prevents stress-induced aggregation of blood plasma proteins. Does not require ATP. Maintains partially unfolded proteins in a state appropriate for subsequent refolding by other chaperones, such as HSPA8/HSC70. Does not refold proteins by itself. Binding to cell surface receptors triggers internalization of the chaperone-client complex and subsequent lysosomal or proteasomal degradation. When secreted, protects cells against apoptosis and against cytolysis by complement: inhibits assembly of the complement membrane attack complex (MAC) by preventing polymerization of C9 pore component of the MAC complex. Intracellular forms interact with ubiquitin and SCF (SKP1-CUL1-F-box protein) E3 ubiquitin-protein ligase complexes and promote the ubiquitination and subsequent proteasomal degradation of target proteins. Modulates NF-kappa-B transcriptional activity. Promotes apoptosis when in the nucleus. Inhibits apoptosis when associated with the mitochondrial membrane by interference with BAX-dependent release of cytochrome c into the cytoplasm. Plays a role in the regulation of cell proliferation. The protein is Clusterin (CLU) of Coturnix japonica (Japanese quail).